The sequence spans 892 residues: Alanine--tRNA ligase (892 aa).

The Zn(2+) site is built by His-596, His-600, Cys-700, and His-704.

The protein belongs to the class-II aminoacyl-tRNA synthetase family. Zn(2+) is required as a cofactor.

It is found in the cytoplasm. It carries out the reaction tRNA(Ala) + L-alanine + ATP = L-alanyl-tRNA(Ala) + AMP + diphosphate. In terms of biological role, catalyzes the attachment of alanine to tRNA(Ala) in a two-step reaction: alanine is first activated by ATP to form Ala-AMP and then transferred to the acceptor end of tRNA(Ala). Also edits incorrectly charged Ser-tRNA(Ala) and Gly-tRNA(Ala) via its editing domain. The polypeptide is Alanine--tRNA ligase (Methanococcus maripaludis (strain C5 / ATCC BAA-1333)).